The primary structure comprises 101 residues: Urease subunit beta (101 aa).

This sequence belongs to the urease beta subunit family. In terms of assembly, heterotrimer of UreA (gamma), UreB (beta) and UreC (alpha) subunits. Three heterotrimers associate to form the active enzyme.

It is found in the cytoplasm. The catalysed reaction is urea + 2 H2O + H(+) = hydrogencarbonate + 2 NH4(+). Its pathway is nitrogen metabolism; urea degradation; CO(2) and NH(3) from urea (urease route): step 1/1. The polypeptide is Urease subunit beta (Jannaschia sp. (strain CCS1)).